The sequence spans 671 residues: NADH-quinone oxidoreductase subunit G (671 aa).

The 2Fe-2S ferredoxin-type domain occupies 1 to 78; it reads MIKLNIDGSE…GMVIHTDTPM (78 aa). Residues Cys-34, Cys-45, Cys-48, and Cys-62 each coordinate [2Fe-2S] cluster. One can recognise a 4Fe-4S His(Cys)3-ligated-type domain in the interval 78-117; sequence MVKKAREGVMEFLLINHPLDCPICDQGGECDLQDQAFRYG. 8 residues coordinate [4Fe-4S] cluster: His-94, Cys-98, Cys-101, Cys-107, Cys-146, Cys-149, Cys-152, and Cys-196. One can recognise a 4Fe-4S Mo/W bis-MGD-type domain in the interval 215 to 271; sequence LKHTASIGVHDAEGSNIRIDSRGDEVMRILPRVNEEINEEWLSDKNRFSYDGLKYQR.

It belongs to the complex I 75 kDa subunit family. [2Fe-2S] cluster serves as cofactor. [4Fe-4S] cluster is required as a cofactor.

The enzyme catalyses a quinone + NADH + 5 H(+)(in) = a quinol + NAD(+) + 4 H(+)(out). Functionally, NDH-1 shuttles electrons from NADH, via FMN and iron-sulfur (Fe-S) centers, to quinones in the respiratory chain. Couples the redox reaction to proton translocation (for every two electrons transferred, four hydrogen ions are translocated across the cytoplasmic membrane), and thus conserves the redox energy in a proton gradient. The sequence is that of NADH-quinone oxidoreductase subunit G (nuoG) from Rickettsia felis (strain ATCC VR-1525 / URRWXCal2) (Rickettsia azadi).